A 281-amino-acid polypeptide reads, in one-letter code: N-acetylmuramic acid 6-phosphate etherase (281 aa).

The region spanning 63 to 226 is the SIS domain; it reads IVPRMKQGGR…TTSVMIQLGR (164 aa). Residue E91 is the Proton donor of the active site. Residue E122 is part of the active site.

It belongs to the GCKR-like family. MurNAc-6-P etherase subfamily. In terms of assembly, homodimer.

The enzyme catalyses N-acetyl-D-muramate 6-phosphate + H2O = N-acetyl-D-glucosamine 6-phosphate + (R)-lactate. The protein operates within amino-sugar metabolism; N-acetylmuramate degradation. Functionally, specifically catalyzes the cleavage of the D-lactyl ether substituent of MurNAc 6-phosphate, producing GlcNAc 6-phosphate and D-lactate. The polypeptide is N-acetylmuramic acid 6-phosphate etherase (Bacteroides fragilis (strain YCH46)).